We begin with the raw amino-acid sequence, 487 residues long: Protein nucleotidyltransferase YdiU (487 aa).

Residues Gly-90, Gly-92, Arg-93, Lys-113, Asp-125, Gly-126, Arg-176, and Arg-183 each coordinate ATP. Catalysis depends on Asp-252, which acts as the Proton acceptor. Residues Asn-253 and Asp-262 each contribute to the Mg(2+) site. Asp-262 is a binding site for ATP.

This sequence belongs to the SELO family. Mg(2+) serves as cofactor. Requires Mn(2+) as cofactor.

The catalysed reaction is L-seryl-[protein] + ATP = 3-O-(5'-adenylyl)-L-seryl-[protein] + diphosphate. The enzyme catalyses L-threonyl-[protein] + ATP = 3-O-(5'-adenylyl)-L-threonyl-[protein] + diphosphate. It carries out the reaction L-tyrosyl-[protein] + ATP = O-(5'-adenylyl)-L-tyrosyl-[protein] + diphosphate. It catalyses the reaction L-histidyl-[protein] + UTP = N(tele)-(5'-uridylyl)-L-histidyl-[protein] + diphosphate. The catalysed reaction is L-seryl-[protein] + UTP = O-(5'-uridylyl)-L-seryl-[protein] + diphosphate. The enzyme catalyses L-tyrosyl-[protein] + UTP = O-(5'-uridylyl)-L-tyrosyl-[protein] + diphosphate. Functionally, nucleotidyltransferase involved in the post-translational modification of proteins. It can catalyze the addition of adenosine monophosphate (AMP) or uridine monophosphate (UMP) to a protein, resulting in modifications known as AMPylation and UMPylation. The polypeptide is Protein nucleotidyltransferase YdiU (Pseudomonas syringae pv. tomato (strain ATCC BAA-871 / DC3000)).